We begin with the raw amino-acid sequence, 175 residues long: RNA pyrophosphohydrolase (175 aa).

One can recognise a Nudix hydrolase domain in the interval 6–149 (GYRPNVGIVI…KRDVYRRVMK (144 aa)). Residues 38-59 (GGINPGETAEQAMYRELFEEVG) carry the Nudix box motif.

This sequence belongs to the Nudix hydrolase family. RppH subfamily. It depends on a divalent metal cation as a cofactor.

Functionally, accelerates the degradation of transcripts by removing pyrophosphate from the 5'-end of triphosphorylated RNA, leading to a more labile monophosphorylated state that can stimulate subsequent ribonuclease cleavage. This chain is RNA pyrophosphohydrolase, found in Serratia proteamaculans (strain 568).